Here is a 43-residue protein sequence, read N- to C-terminus: Thaumatin-like protein 1 (43 aa).

Belongs to the thaumatin family.

This Glebionis coronaria (Crown daisy) protein is Thaumatin-like protein 1.